The sequence spans 436 residues: MDTSNHNQDHDSHVAAQRENDNNYMPPSPSMSESSMIFERNVEDPSYLYKTVSNNAANSLSRQSSRTSLFNHNNSSNRNFHNLSQRSSAVNLHLQPSRTNESIASYQTYNPDFVVQTPLDHRRTLENFVPPALDAGCSIVTDDTTGLDDVDMVYSRRPSTIGLDRALGRTRSLSSQSFDNETSPAHPRSPNDHGSRLLRFYSYADMLSDDNNNNVSNATSTSSTANPLRRPPMQGHYSFSSSLLNSPSHLPSPPSASASPPQHMNFTNPFIISRRYSNTTINNANGGTSAGSTTGAALSRSPSNQQYLLKQQRSPSGSARSRRNSNRPGSAANIMIGKPKSKFHMESSGSEGFSSEEEDNTMIERDKLNLKQKLQSQLAQPPSIANMVNDNHNNTNKHKNTINNNIKNSPAFTNSNPSSKSNSNSTITSMNPDTTK.

A disordered region spans residues 1 to 34 (MDTSNHNQDHDSHVAAQRENDNNYMPPSPSMSES). Over residues 7-21 (NQDHDSHVAAQREND) the composition is skewed to basic and acidic residues. Phosphoserine is present on residues S53, S61, S102, and S172. Disordered regions lie at residues 165 to 195 (RALG…DHGS), 211 to 266 (NNNN…HMNF), 282 to 360 (NNAN…EEDN), and 389 to 436 (NDNH…DTTK). Residues 171 to 183 (RSLSSQSFDNETS) show a composition bias toward polar residues. Composition is skewed to low complexity over residues 211 to 226 (NNNN…STAN), 238 to 261 (SFSS…ASPP), and 282 to 299 (NNAN…AALS). A phosphoserine mark is found at S299, S301, S303, and S325. Residues 300–312 (RSPSNQQYLLKQQ) show a composition bias toward polar residues. The span at 401-436 (TINNNIKNSPAFTNSNPSSKSNSNSTITSMNPDTTK) shows a compositional bias: low complexity.

To yeast MFL3.

The protein localises to the cytoplasm. Functionally, can suppress the synthetic lethality of the hal3 sit4 double mutation when overexpressed, suggesting that it is involved in the G1-S transition. This is Protein VHS2 (VHS2) from Saccharomyces cerevisiae (strain ATCC 204508 / S288c) (Baker's yeast).